The following is a 427-amino-acid chain: Tol-Pal system protein TolB (427 aa).

Residues 1-23 form the signal peptide; the sequence is MKLLKRLVSVFAIVLAVGSNAFA.

It belongs to the TolB family. In terms of assembly, the Tol-Pal system is composed of five core proteins: the inner membrane proteins TolA, TolQ and TolR, the periplasmic protein TolB and the outer membrane protein Pal. They form a network linking the inner and outer membranes and the peptidoglycan layer.

It localises to the periplasm. In terms of biological role, part of the Tol-Pal system, which plays a role in outer membrane invagination during cell division and is important for maintaining outer membrane integrity. The sequence is that of Tol-Pal system protein TolB from Haemophilus influenzae (strain PittGG).